The following is a 389-amino-acid chain: Lipid-A-disaccharide synthase (389 aa).

This sequence belongs to the LpxB family.

It carries out the reaction a lipid X + a UDP-2-N,3-O-bis[(3R)-3-hydroxyacyl]-alpha-D-glucosamine = a lipid A disaccharide + UDP + H(+). It participates in bacterial outer membrane biogenesis; LPS lipid A biosynthesis. In terms of biological role, condensation of UDP-2,3-diacylglucosamine and 2,3-diacylglucosamine-1-phosphate to form lipid A disaccharide, a precursor of lipid A, a phosphorylated glycolipid that anchors the lipopolysaccharide to the outer membrane of the cell. The chain is Lipid-A-disaccharide synthase from Burkholderia multivorans (strain ATCC 17616 / 249).